We begin with the raw amino-acid sequence, 188 residues long: Elongation factor P (188 aa).

Belongs to the elongation factor P family.

The protein localises to the cytoplasm. Its pathway is protein biosynthesis; polypeptide chain elongation. In terms of biological role, involved in peptide bond synthesis. Stimulates efficient translation and peptide-bond synthesis on native or reconstituted 70S ribosomes in vitro. Probably functions indirectly by altering the affinity of the ribosome for aminoacyl-tRNA, thus increasing their reactivity as acceptors for peptidyl transferase. In Chlorobium phaeobacteroides (strain DSM 266 / SMG 266 / 2430), this protein is Elongation factor P.